Here is a 570-residue protein sequence, read N- to C-terminus: Periplasmic trehalase (570 aa).

Residues 1-34 (MIPPEIRRSVLLQKAIKLALAGTLLTFASFSATA) form the signal peptide. Substrate contacts are provided by residues Arg159, 166–167 (WD), Asn203, 212–214 (RSQ), 284–286 (RPE), and Gly317. Catalysis depends on proton donor/acceptor residues Asp319 and Glu503. Residue Glu518 coordinates substrate. Residues 544 to 570 (KPCDSVPSTRPASLSATPTKTPSAATQ) form a disordered region. The span at 554-570 (PASLSATPTKTPSAATQ) shows a compositional bias: low complexity.

Belongs to the glycosyl hydrolase 37 family. In terms of assembly, monomer.

Its subcellular location is the periplasm. The enzyme catalyses alpha,alpha-trehalose + H2O = alpha-D-glucose + beta-D-glucose. Provides the cells with the ability to utilize trehalose at high osmolarity by splitting it into glucose molecules that can subsequently be taken up by the phosphotransferase-mediated uptake system. This Salmonella paratyphi A (strain AKU_12601) protein is Periplasmic trehalase.